We begin with the raw amino-acid sequence, 656 residues long: DNA mismatch repair protein MutL (656 aa).

Residues 385–427 (DNSDSLTEQNSTDYTVNQPETGSVSEKITDRTVESSNEFTDRT) form a disordered region. The segment covering 387 to 410 (SDSLTEQNSTDYTVNQPETGSVSE) has biased composition (polar residues). A compositionally biased stretch (basic and acidic residues) spans 411-427 (KITDRTVESSNEFTDRT).

Belongs to the DNA mismatch repair MutL/HexB family.

Its function is as follows. This protein is involved in the repair of mismatches in DNA. It is required for dam-dependent methyl-directed DNA mismatch repair. May act as a 'molecular matchmaker', a protein that promotes the formation of a stable complex between two or more DNA-binding proteins in an ATP-dependent manner without itself being part of a final effector complex. The polypeptide is DNA mismatch repair protein MutL (Lactococcus lactis subsp. cremoris (strain SK11)).